The primary structure comprises 379 residues: Epoxyqueuosine reductase (379 aa).

The active-site Proton donor is the Asp139. The region spanning 181–213 (IPLPVDQPVEEGCGKCVACMTICPTGAIVEPYT) is the 4Fe-4S ferredoxin-type domain. Residues Cys193, Cys196, Cys199, Cys203, Cys219, Cys246, Cys249, and Cys253 each coordinate [4Fe-4S] cluster.

The protein belongs to the QueG family. In terms of assembly, monomer. Cob(II)alamin serves as cofactor. [4Fe-4S] cluster is required as a cofactor.

It localises to the cytoplasm. The catalysed reaction is epoxyqueuosine(34) in tRNA + AH2 = queuosine(34) in tRNA + A + H2O. It functions in the pathway tRNA modification; tRNA-queuosine biosynthesis. Functionally, catalyzes the conversion of epoxyqueuosine (oQ) to queuosine (Q), which is a hypermodified base found in the wobble positions of tRNA(Asp), tRNA(Asn), tRNA(His) and tRNA(Tyr). In Escherichia coli (strain K12), this protein is Epoxyqueuosine reductase.